A 377-amino-acid chain; its full sequence is Adaptive-response sensory kinase SasA (377 aa).

The region spanning 154-373 (MLVHDLRSPL…SFHFTLPVYR (220 aa)) is the Histidine kinase domain. At histidine 157 the chain carries Phosphohistidine; by autocatalysis.

As to quaternary structure, homooligomerizes. Interacts with KaiC. Participates in the KaiABC clock complex, whose core is composed of a KaiC homohexamer, 6 KaiB and up to 6 KaiA dimers. SasA and KaiB(fs) compete to bind to KaiC.

The enzyme catalyses ATP + protein L-histidine = ADP + protein N-phospho-L-histidine.. Member of the two-component regulatory system SasA/RpaA involved in genome-wide circadian gene expression. One of several clock output pathways. Participates in the Kai clock protein complex, the main circadian regulator in cyanobacteria, via its interaction with KaiC. KaiC enhances the autophosphorylation activity of SasA, which then transfers its phosphate group to RpaA to activate it. In addition to its output function, recruits fold-shifted KaiB (KaiB(fs)) to KaiC to cooperatively form the KaiB(6):KaiC(6) complex (independent of SasA kinase activity). Required for robustness of the circadian rhythm of gene expression and is involved in clock output, also required for adaptation to light/dark cycles. This is Adaptive-response sensory kinase SasA from Synechococcus sp. (strain JA-2-3B'a(2-13)) (Cyanobacteria bacterium Yellowstone B-Prime).